The primary structure comprises 341 residues: Methionine import ATP-binding protein MetN (341 aa).

In terms of domain architecture, ABC transporter spans 2–241; sequence INLQDVSKVY…PKEQMTKRFV (240 aa). Residue 38-45 coordinates ATP; the sequence is GYSGAGKS.

It belongs to the ABC transporter superfamily. Methionine importer (TC 3.A.1.24) family. The complex is composed of two ATP-binding proteins (MetN), two transmembrane proteins (MetP) and a solute-binding protein (MetQ).

It is found in the cell membrane. The catalysed reaction is L-methionine(out) + ATP + H2O = L-methionine(in) + ADP + phosphate + H(+). It catalyses the reaction D-methionine(out) + ATP + H2O = D-methionine(in) + ADP + phosphate + H(+). In terms of biological role, part of the ABC transporter complex MetNPQ involved in methionine import. Responsible for energy coupling to the transport system. It has also been shown to be involved in methionine sulfoxide transport. The sequence is that of Methionine import ATP-binding protein MetN from Bacillus subtilis (strain 168).